We begin with the raw amino-acid sequence, 552 residues long: Leucine-rich repeat-containing protein 56 (552 aa).

5 LRR repeats span residues 94 to 115, 117 to 138, 139 to 160, 161 to 182, and 186 to 206; these read NLIQLKLNHSYLGSLRDLGTSL, HLQVLWLARCGLTDLDGIGSFL, ELKELYVSYNNISDLSPLCLLE, QLEVLDLEGNNVEDLGQMRYLQ, and RLAMLTLEGNLVCLKPDPGPS. Disordered stretches follow at residues 348-375 and 401-435; these read APLEQMPPHRPDLAIRPSTPRPDPAESC and QQERSAQVQAQDPQKDPVEQEDQTGPKTSLTPPRL.

The protein belongs to the LRRC56 family. In terms of assembly, interacts with IFT88.

The protein resides in the cell projection. The protein localises to the cilium. Its function is as follows. Required for the assembly of dynein arms. The protein is Leucine-rich repeat-containing protein 56 (Lrrc56) of Mus musculus (Mouse).